The sequence spans 564 residues: O-fucosyltransferase 6 (564 aa).

Residues Leu17–Ile37 traverse the membrane as a helical; Signal-anchor for type II membrane protein segment. 2 N-linked (GlcNAc...) asparagine glycosylation sites follow: Asn95 and Asn139. His277–Arg279 is a substrate binding site. The N-linked (GlcNAc...) asparagine glycan is linked to Asn449. Residues Met501–Lys512 are compositionally biased toward basic and acidic residues. The interval Met501 to Thr542 is disordered. Residues Glu513 to Asp532 show a composition bias toward acidic residues. Asn540 is a glycosylation site (N-linked (GlcNAc...) asparagine).

It belongs to the glycosyltransferase GT106 family.

The protein localises to the membrane. The protein operates within glycan metabolism. The protein is O-fucosyltransferase 6 of Arabidopsis thaliana (Mouse-ear cress).